The chain runs to 139 residues: Probable transcription termination protein NusA (139 aa).

The region spanning 97–139 is the KH domain; the sequence is STVAYAEVDRADTGVAIGRDGETIETARRLAERQFDIDDIELA.

This sequence belongs to the NusA family.

Its subcellular location is the cytoplasm. Functionally, participates in transcription termination. The polypeptide is Probable transcription termination protein NusA (Halococcus morrhuae (Micrococcus morrhuae)).